The sequence spans 1927 residues: Lactase/phlorizin hydrolase (1927 aa).

The first 19 residues, 1-19 (MELSWHVVFIALLSFSCWG), serve as a signal peptide directing secretion. The propeptide at 20–868 (SDWESDRNFI…NTVNLPSKVR (849 aa)) is XBetaGly. The Extracellular segment spans residues 20–1882 (SDWESDRNFI…LMLGTTEAQT (1863 aa)). N-linked (GlcNAc...) asparagine glycosylation is present at asparagine 42. The glycosyl hydrolase-1 1; Region I stretch occupies residues 44–286 (SGLLGDQSSN…FIFNLKLPDC (243 aa)). The glycosyl hydrolase-1 2; Region II stretch occupies residues 362 to 855 (IWEAFANQSR…GFLTKGAKRL (494 aa)). N-linked (GlcNAc...) asparagine glycosylation is found at asparagine 368, asparagine 418, asparagine 512, asparagine 821, asparagine 934, asparagine 946, and asparagine 989. The segment at 902 to 1366 (TFRDDFLWGV…EVITNNGMPL (465 aa)) is glycosyl hydrolase-1 3; Region III. Phlorizin hydrolase/glycosylceramidase activity. The Proton donor; for phlorizin hydrolase/Glycosylceramidase activity role is filled by glutamate 1065. N-linked (GlcNAc...) asparagine glycosylation occurs at asparagine 1174. The tract at residues 1220–1244 (RLNPPSYEDDQEMAEEEDPSWPSTA) is disordered. The span at 1226–1238 (YEDDQEMAEEEDP) shows a compositional bias: acidic residues. The Nucleophile; for phlorizin hydrolase/Glycosylceramidase activity role is filled by glutamate 1273. Residues asparagine 1340 and asparagine 1508 are each glycosylated (N-linked (GlcNAc...) asparagine). The interval 1373–1846 (LYGRFPEGFI…CNGFPDPATG (474 aa)) is glycosyl hydrolase-1 4; Region IV. Lactase activity. The active-site Proton donor; for lactase activity is glutamate 1538. Residues 1647 to 1927 (RDRSLAAGLN…QQELSPVSSF (281 aa)) form a required for homodimerization and transport to the plasma membrane region. N-linked (GlcNAc...) asparagine glycosylation is found at asparagine 1656 and asparagine 1672. Glutamate 1749 acts as the Nucleophile; for lactase activity in catalysis. 2 N-linked (GlcNAc...) asparagine glycosylation sites follow: asparagine 1761 and asparagine 1814. A helical membrane pass occupies residues 1883-1901 (ALYVLFSLVLLGVCGLAFL). Residues 1902–1927 (SYKYCKRSKQGKTQRSQQELSPVSSF) lie on the Cytoplasmic side of the membrane.

The protein belongs to the glycosyl hydrolase 1 family. In terms of assembly, homodimer. N-glycosylated. In terms of tissue distribution, specifically expressed in small intestine.

The protein localises to the apical cell membrane. The catalysed reaction is lactose + H2O = beta-D-galactose + D-glucose. The enzyme catalyses phlorizin + H2O = phloretin + beta-D-glucose. It carries out the reaction D-cellobiose + H2O = beta-D-glucose + D-glucose. It catalyses the reaction quercetin 4'-O-beta-D-glucoside + H2O = quercetin + beta-D-glucose. The catalysed reaction is quercetin 3-O-beta-D-glucoside + H2O = quercetin + beta-D-glucose. The enzyme catalyses kaempferol 3-O-beta-D-glucoside + H2O = kaempferol + beta-D-glucose. It carries out the reaction luteolin 7-O-beta-D-glucoside + H2O = luteolin + beta-D-glucose. It catalyses the reaction luteolin 4'-O-beta-D-glucoside + H2O = luteolin + beta-D-glucose. The catalysed reaction is (2S)-naringenin 7-O-beta-D-glucoside + H2O = (2S)-naringenin + beta-D-glucose. The enzyme catalyses eriodictyol-7-O-beta-D-glucoside + H2O = (S)-eriodictyol + beta-D-glucose. It carries out the reaction apigenin 7-O-beta-D-glucoside + H2O = apigenin + beta-D-glucose. It catalyses the reaction daidzein 7-O-beta-D-glucoside + H2O = daidzein + beta-D-glucose + H(+). The catalysed reaction is genistein 7-O-beta-D-glucoside + H2O = genistein + beta-D-glucose. The enzyme catalyses a beta-D-galactosyl-N-acylsphingosine + H2O = a ceramide + beta-D-galactose.. It carries out the reaction beta-D-glucosyl-(1&lt;-&gt;1')-N-hexadecanoylsphing-4-enine + H2O = N-hexadecanoylsphing-4-enine + beta-D-glucose. It catalyses the reaction beta-D-galactosyl-(1&lt;-&gt;1')-N-hexadecanoylsphing-4-enine + H2O = beta-D-galactose + N-hexadecanoylsphing-4-enine. The catalysed reaction is beta-D-galactosyl-(1&lt;-&gt;1')-N-hexadecanoylsphinganine + H2O = N-hexadecanoylsphinganine + beta-D-galactose. The enzyme catalyses beta-D-glucosyl-(1&lt;-&gt;1')-N-hexadecanoylsphinganine + H2O = N-hexadecanoylsphinganine + beta-D-glucose. Broad specificity glycosidase of the intestinal brush border membrane that hydrolyzes lactose, the main sugar in mammalian milk, to produce D-glucose and D-galactose. The mature protein is composed of two domains that catalyze the hydrolysis of beta-glucopyranosides and beta-galactopyranosides, with a preference for hydrophilic aglycones (in lactose and cellobiose) for one domain and hydrophobic aglycones (in phlorizin and glycosylceramides) for the other. The protein is Lactase/phlorizin hydrolase of Homo sapiens (Human).